We begin with the raw amino-acid sequence, 227 residues long: MKQSSSIIILVSGGMDSAALLWLAKKEFDKVYAVSFDYGQKHRVELDFAKKLTEEAGVEEHFIAEVPHLKGIKGSALTDRSVEIPSEEYPEGPPVTTVPMRNLNFLSIAASFADIYEIENIGIGVHSVDSPYPDCRAEFVSAAEAAINASSVMVAKKKNRITVYTPFLGMTKTDVLRIGLELGVPYEKTYSCYRGTIPPCGECATCRQRIEAFRSVGLEDPWFKKER.

An ATP-binding site is contributed by 11–21; it reads VSGGMDSAALL. Residues C192, C200, C203, and C206 each contribute to the Zn(2+) site.

It belongs to the QueC family. It depends on Zn(2+) as a cofactor.

It catalyses the reaction 7-carboxy-7-deazaguanine + NH4(+) + ATP = 7-cyano-7-deazaguanine + ADP + phosphate + H2O + H(+). Its pathway is purine metabolism; 7-cyano-7-deazaguanine biosynthesis. Functionally, catalyzes the ATP-dependent conversion of 7-carboxy-7-deazaguanine (CDG) to 7-cyano-7-deazaguanine (preQ(0)). The protein is 7-cyano-7-deazaguanine synthase of Persephonella marina (strain DSM 14350 / EX-H1).